We begin with the raw amino-acid sequence, 352 residues long: Probable transcription factor At1g11510 (352 aa).

Disordered regions lie at residues 1–132 (MSRR…GGEE) and 239–269 (MKSN…KNNC). The segment covering 56–66 (SGSDEETDSDS) has biased composition (acidic residues). 3 stretches are compositionally biased toward basic and acidic residues: residues 89–101 (KTSE…RSLE), 117–132 (VSGE…GGEE), and 241–259 (SNEK…HELD).

This sequence belongs to the GeBP family.

This chain is Probable transcription factor At1g11510, found in Arabidopsis thaliana (Mouse-ear cress).